Reading from the N-terminus, the 205-residue chain is Holliday junction branch migration complex subunit RuvA (205 aa).

The domain I stretch occupies residues 1-64; that stretch reads MIGKLKGVVD…EDMIRLYGFR (64 aa). The domain II stretch occupies residues 65-143; the sequence is SDAEREWFRL…AFAPVDPALI (79 aa). Positions 144–152 are flexible linker; the sequence is RLAGAVEER. The tract at residues 153 to 205 is domain III; sequence TAPQPVADAISALVNLGYPQIQASAAVAAALQGAGEGAEAKTLIRLGLRELAR.

Belongs to the RuvA family. Homotetramer. Forms an RuvA(8)-RuvB(12)-Holliday junction (HJ) complex. HJ DNA is sandwiched between 2 RuvA tetramers; dsDNA enters through RuvA and exits via RuvB. An RuvB hexamer assembles on each DNA strand where it exits the tetramer. Each RuvB hexamer is contacted by two RuvA subunits (via domain III) on 2 adjacent RuvB subunits; this complex drives branch migration. In the full resolvosome a probable DNA-RuvA(4)-RuvB(12)-RuvC(2) complex forms which resolves the HJ.

The protein localises to the cytoplasm. Its function is as follows. The RuvA-RuvB-RuvC complex processes Holliday junction (HJ) DNA during genetic recombination and DNA repair, while the RuvA-RuvB complex plays an important role in the rescue of blocked DNA replication forks via replication fork reversal (RFR). RuvA specifically binds to HJ cruciform DNA, conferring on it an open structure. The RuvB hexamer acts as an ATP-dependent pump, pulling dsDNA into and through the RuvAB complex. HJ branch migration allows RuvC to scan DNA until it finds its consensus sequence, where it cleaves and resolves the cruciform DNA. In Methylobacterium nodulans (strain LMG 21967 / CNCM I-2342 / ORS 2060), this protein is Holliday junction branch migration complex subunit RuvA.